Here is a 177-residue protein sequence, read N- to C-terminus: MSRVAKAPVVIPAGVEVKLNGQVISIKGKNGELTRTVHSAVEVKQEENTLTFAPREGAVDGWAQAGTTRALLNSMVIGVTEGFTKKLQLVGVGYRAAVKGNVVNLALGFSHPVDHELPAGITAECPTQTEIVLKGADKQVIGQVAADLRAYRRPEPYKGKGVRYADEVVRTKEAKKK.

The protein belongs to the universal ribosomal protein uL6 family. Part of the 50S ribosomal subunit.

This protein binds to the 23S rRNA, and is important in its secondary structure. It is located near the subunit interface in the base of the L7/L12 stalk, and near the tRNA binding site of the peptidyltransferase center. In Yersinia pseudotuberculosis serotype O:1b (strain IP 31758), this protein is Large ribosomal subunit protein uL6.